The primary structure comprises 273 residues: Undecaprenyl-diphosphatase (273 aa).

8 consecutive transmembrane segments (helical) span residues 3–23 (IIEL…EFAP), 48–68 (GANT…VVVF), 89–109 (LTLM…VLFE), 116–136 (LFST…MIAA), 151–171 (ITYK…WPGF), 192–212 (ADFT…ISLL), 225–245 (FFVV…RFFL), and 253–273 (LVPF…VYFA).

The protein belongs to the UppP family.

It localises to the cell membrane. It catalyses the reaction di-trans,octa-cis-undecaprenyl diphosphate + H2O = di-trans,octa-cis-undecaprenyl phosphate + phosphate + H(+). In terms of biological role, catalyzes the dephosphorylation of undecaprenyl diphosphate (UPP). Confers resistance to bacitracin. This Anoxybacillus flavithermus (strain DSM 21510 / WK1) protein is Undecaprenyl-diphosphatase.